A 156-amino-acid polypeptide reads, in one-letter code: Transcriptional repressor NrdR (156 aa).

The segment at 3–34 (CPFCGNIDTQVKDSRPAEDHVSIRRRRFCPAC) is a zinc-finger region. The 91-residue stretch at 49 to 139 (LVVIKTSGKR…VYKNFQAADD (91 aa)) folds into the ATP-cone domain.

The protein belongs to the NrdR family. It depends on Zn(2+) as a cofactor.

Negatively regulates transcription of bacterial ribonucleotide reductase nrd genes and operons by binding to NrdR-boxes. In Ruegeria pomeroyi (strain ATCC 700808 / DSM 15171 / DSS-3) (Silicibacter pomeroyi), this protein is Transcriptional repressor NrdR.